We begin with the raw amino-acid sequence, 491 residues long: Cysteine--tRNA ligase (491 aa).

Residue cysteine 31 participates in Zn(2+) binding. The 'HIGH' region motif lies at 33 to 43 (PTVYGDAHLGH). Residues cysteine 226, histidine 251, and glutamate 255 each coordinate Zn(2+). The short motif at 283–287 (KMGKS) is the 'KMSKS' region element. Lysine 286 provides a ligand contact to ATP.

It belongs to the class-I aminoacyl-tRNA synthetase family. In terms of assembly, monomer. The cofactor is Zn(2+).

It localises to the cytoplasm. The enzyme catalyses tRNA(Cys) + L-cysteine + ATP = L-cysteinyl-tRNA(Cys) + AMP + diphosphate. The polypeptide is Cysteine--tRNA ligase (Bacteroides fragilis (strain ATCC 25285 / DSM 2151 / CCUG 4856 / JCM 11019 / LMG 10263 / NCTC 9343 / Onslow / VPI 2553 / EN-2)).